Reading from the N-terminus, the 515-residue chain is Signal transduction histidine-protein kinase/phosphatase MprB (515 aa).

The Cytoplasmic segment spans residues 1–24; it reads MTLPPPPSRLKPPRNTSSLSLRWR. Residues 25–45 form a helical membrane-spanning segment; the sequence is VMLLAMSMVAMVVVLMSVAVY. The Extracellular portion of the chain corresponds to 46-165; it reads AVVSRALYDD…TGQVLGRLGT (120 aa). The chain crosses the membrane as a helical span at residues 166–186; that stretch reads VLLIVGGVGVAVAAIAGGMVA. The HAMP domain maps to 187–239; the sequence is RAGLRPVGRLTQAAERVARTDDLRPIPVFGSDELARLTEAFNMMLRALTESRE. Topologically, residues 187–515 are cytoplasmic; it reads RAGLRPVGRL…GKSRSASKEL (329 aa). The Histidine kinase domain maps to 247-467; it reads DAGHELRTPL…SFYVMLPGRP (221 aa). At His250 the chain carries Phosphohistidine; by autocatalysis. The disordered stretch occupies residues 468 to 515; the sequence is LTPGGNGTAPVPAAQFDPDMRSAGSRADRRVIKNTETNGKSRSASKEL.

The cofactor is Mg(2+). Requires Mn(2+) as cofactor. Post-translationally, autophosphorylated.

It localises to the cell membrane. It carries out the reaction ATP + protein L-histidine = ADP + protein N-phospho-L-histidine.. Functionally, member of the two-component regulatory system MprB/MprA which contributes to maintaining a balance among several systems involved in stress resistance and is required for establishment and maintenance of persistent infection in the host. In response to environmental signals MprB acts both as a membrane-associated protein kinase that undergoes autophosphorylation and subsequently transfers the phosphate to MprA, and a protein phosphatase that dephosphorylates phospho-MprA. This Mycobacterium sp. (strain KMS) protein is Signal transduction histidine-protein kinase/phosphatase MprB (mprB).